A 213-amino-acid chain; its full sequence is Pyridoxine/pyridoxamine 5'-phosphate oxidase (213 aa).

FMN is bound by residues Arg-60–Lys-65, Tyr-75–Ser-76, Lys-82, and Gln-104. Lys-65 lines the substrate pocket. Positions 122 and 126 each coordinate substrate. FMN-binding positions include Gln-139–Ser-140 and Trp-184. Arg-190–His-192 serves as a coordination point for substrate. FMN is bound at residue Arg-194.

Belongs to the pyridoxamine 5'-phosphate oxidase family. Homodimer. FMN is required as a cofactor.

The enzyme catalyses pyridoxamine 5'-phosphate + O2 + H2O = pyridoxal 5'-phosphate + H2O2 + NH4(+). It carries out the reaction pyridoxine 5'-phosphate + O2 = pyridoxal 5'-phosphate + H2O2. It functions in the pathway cofactor metabolism; pyridoxal 5'-phosphate salvage; pyridoxal 5'-phosphate from pyridoxamine 5'-phosphate: step 1/1. Its pathway is cofactor metabolism; pyridoxal 5'-phosphate salvage; pyridoxal 5'-phosphate from pyridoxine 5'-phosphate: step 1/1. Catalyzes the oxidation of either pyridoxine 5'-phosphate (PNP) or pyridoxamine 5'-phosphate (PMP) into pyridoxal 5'-phosphate (PLP). The protein is Pyridoxine/pyridoxamine 5'-phosphate oxidase of Nitrobacter hamburgensis (strain DSM 10229 / NCIMB 13809 / X14).